The sequence spans 326 residues: Thioredoxin reductase (326 aa).

FAD is bound at residue 55–62 (EGPEPGGQ). A disulfide bridge connects residues C156 and C159. Residue 298–307 (DVSNKLYAQA) participates in FAD binding.

The protein belongs to the class-II pyridine nucleotide-disulfide oxidoreductase family. Homodimer. FAD is required as a cofactor.

The protein localises to the cytoplasm. It catalyses the reaction [thioredoxin]-dithiol + NADP(+) = [thioredoxin]-disulfide + NADPH + H(+). This Borreliella burgdorferi (strain ATCC 35210 / DSM 4680 / CIP 102532 / B31) (Borrelia burgdorferi) protein is Thioredoxin reductase (trxB).